The sequence spans 330 residues: Holliday junction branch migration complex subunit RuvB (330 aa).

A large ATPase domain (RuvB-L) region spans residues 1 to 181 (MEDRLVGCRL…FGVINKLELY (181 aa)). Residues Leu20, Arg21, Gly62, Lys65, Thr66, Thr67, 128 to 130 (EDY), Arg171, Tyr181, and Arg218 each bind ATP. Thr66 contacts Mg(2+). The segment at 182 to 252 (SVEELGQIVK…IARTGLEALE (71 aa)) is small ATPAse domain (RuvB-S). Residues 255–330 (EIGLDAVDRN…AYEHFGLKYE (76 aa)) form a head domain (RuvB-H) region. Lys310 and Arg315 together coordinate DNA.

Belongs to the RuvB family. Homohexamer. Forms an RuvA(8)-RuvB(12)-Holliday junction (HJ) complex. HJ DNA is sandwiched between 2 RuvA tetramers; dsDNA enters through RuvA and exits via RuvB. An RuvB hexamer assembles on each DNA strand where it exits the tetramer. Each RuvB hexamer is contacted by two RuvA subunits (via domain III) on 2 adjacent RuvB subunits; this complex drives branch migration. In the full resolvosome a probable DNA-RuvA(4)-RuvB(12)-RuvC(2) complex forms which resolves the HJ.

It is found in the cytoplasm. The enzyme catalyses ATP + H2O = ADP + phosphate + H(+). The RuvA-RuvB-RuvC complex processes Holliday junction (HJ) DNA during genetic recombination and DNA repair, while the RuvA-RuvB complex plays an important role in the rescue of blocked DNA replication forks via replication fork reversal (RFR). RuvA specifically binds to HJ cruciform DNA, conferring on it an open structure. The RuvB hexamer acts as an ATP-dependent pump, pulling dsDNA into and through the RuvAB complex. RuvB forms 2 homohexamers on either side of HJ DNA bound by 1 or 2 RuvA tetramers; 4 subunits per hexamer contact DNA at a time. Coordinated motions by a converter formed by DNA-disengaged RuvB subunits stimulates ATP hydrolysis and nucleotide exchange. Immobilization of the converter enables RuvB to convert the ATP-contained energy into a lever motion, pulling 2 nucleotides of DNA out of the RuvA tetramer per ATP hydrolyzed, thus driving DNA branch migration. The RuvB motors rotate together with the DNA substrate, which together with the progressing nucleotide cycle form the mechanistic basis for DNA recombination by continuous HJ branch migration. Branch migration allows RuvC to scan DNA until it finds its consensus sequence, where it cleaves and resolves cruciform DNA. This chain is Holliday junction branch migration complex subunit RuvB, found in Acetivibrio thermocellus (strain ATCC 27405 / DSM 1237 / JCM 9322 / NBRC 103400 / NCIMB 10682 / NRRL B-4536 / VPI 7372) (Clostridium thermocellum).